A 464-amino-acid chain; its full sequence is ATP synthase subunit beta (464 aa).

Residue 153–160 (GGAGVGKT) coordinates ATP.

This sequence belongs to the ATPase alpha/beta chains family. In terms of assembly, F-type ATPases have 2 components, CF(1) - the catalytic core - and CF(0) - the membrane proton channel. CF(1) has five subunits: alpha(3), beta(3), gamma(1), delta(1), epsilon(1). CF(0) has three main subunits: a(1), b(2) and c(9-12). The alpha and beta chains form an alternating ring which encloses part of the gamma chain. CF(1) is attached to CF(0) by a central stalk formed by the gamma and epsilon chains, while a peripheral stalk is formed by the delta and b chains.

It is found in the cell inner membrane. The catalysed reaction is ATP + H2O + 4 H(+)(in) = ADP + phosphate + 5 H(+)(out). In terms of biological role, produces ATP from ADP in the presence of a proton gradient across the membrane. The catalytic sites are hosted primarily by the beta subunits. In Burkholderia ambifaria (strain MC40-6), this protein is ATP synthase subunit beta.